Consider the following 182-residue polypeptide: MAQRSGKITLYEGKHFTGQKLEVFGDCDNFQDRGFMNRVNSIHVESGAWVCFNHPDFRGQQFILEHGDYPDFFRWNSHSDHMGSCRPVGMHGEHFRLEIFEGCNFTGQCLEFLEDSPFLQSRGWVKNCVNTIKVYGDGAAWSPRSFGAEDFQLSSSLQSDQGPEEATTKPATTQPPFLTANL.

Beta/gamma crystallin 'Greek key' domains lie at 6 to 46 (GKIT…HVES), 47 to 89 (GAWV…RPVG), and 95 to 136 (FRLE…KVYG). A disordered region spans residues 153–182 (LSSSLQSDQGPEEATTKPATTQPPFLTANL). Polar residues predominate over residues 169–182 (KPATTQPPFLTANL).

The protein belongs to the beta/gamma-crystallin family. Monomer. In terms of tissue distribution, not specifically expressed in eye.

This Homo sapiens (Human) protein is Gamma-crystallin N.